A 314-amino-acid chain; its full sequence is Fumarylacetoacetate hydrolase domain-containing protein 2 (314 aa).

Residues Glu-159, Glu-161, and Asp-190 each coordinate a divalent metal cation. Lys-203 bears the N6-acetyllysine; alternate mark. An N6-succinyllysine; alternate modification is found at Lys-203. Lys-234 carries the post-translational modification N6-acetyllysine.

This sequence belongs to the FAH family. Requires Ca(2+) as cofactor. The cofactor is Mg(2+).

Its function is as follows. May have hydrolase activity. This is Fumarylacetoacetate hydrolase domain-containing protein 2 (FAHD2) from Pongo abelii (Sumatran orangutan).